We begin with the raw amino-acid sequence, 464 residues long: A-type ATP synthase subunit B (464 aa).

It belongs to the ATPase alpha/beta chains family. Has multiple subunits with at least A(3), B(3), C, D, E, F, H, I and proteolipid K(x).

Its subcellular location is the cell membrane. Its function is as follows. Component of the A-type ATP synthase that produces ATP from ADP in the presence of a proton gradient across the membrane. The B chain is a regulatory subunit. This Methanococcus aeolicus (strain ATCC BAA-1280 / DSM 17508 / OCM 812 / Nankai-3) protein is A-type ATP synthase subunit B.